A 539-amino-acid chain; its full sequence is Tripartite motif-containing protein 26 (539 aa).

Residues 16–57 form an RING-type zinc finger; the sequence is CSICLDYLRDPVTIDCGHVFCRSCTTDVRPISGSRPVCPLCK. The B box-type zinc-finger motif lies at 97 to 138; that stretch reads QDAKLCERHREKLHYYCEDDGKLLCVMCRESREHRPHTAVLM. Residues Cys102, His105, Cys124, and His130 each coordinate Zn(2+). Positions 188 to 227 form a coiled coil; it reads IVAEFEQGHQFLREREEHLLEQLAKLEQELTEGREKFKSR. In terms of domain architecture, B30.2/SPRY spans 295-539; that stretch reads RGLREFQGKL…WPGTRLLLRP (245 aa). Residues 376–437 are disordered; the sequence is REGWSEDEEE…EEEEEVLESC (62 aa). Acidic residues predominate over residues 380-434; it reads SEDEEEGDEEEEGEEEEEEEEAGYGDGYDDWETDEDEESLGDEEEEEEEEEEEVL.

The protein belongs to the TRIM/RBCC family. Interacts with TBK1; this interaction bridges together TBK1 and NEMO in order to activate TBK1. Interacts with INCA1. Post-translationally, autoubiquitinates upon viral infection. In turn, autoubiquitinated TRIM26 recruits NEMO and bridges TBK1-NEMO interaction.

The protein localises to the cytoplasm. It localises to the nucleus. It catalyses the reaction S-ubiquitinyl-[E2 ubiquitin-conjugating enzyme]-L-cysteine + [acceptor protein]-L-lysine = [E2 ubiquitin-conjugating enzyme]-L-cysteine + N(6)-ubiquitinyl-[acceptor protein]-L-lysine.. In terms of biological role, E3 ubiquitin-protein ligase which regulates the IFN-beta production and antiviral response downstream of various DNA-encoded pattern-recognition receptors (PRRs). Also plays a central role in determining the response to different forms of oxidative stress by controlling levels of DNA glycosylases NEIL1, NEIL3 and NTH1 that are involved in repair of damaged DNA. Promotes nuclear IRF3 ubiquitination and proteasomal degradation. Bridges together TBK1 and NEMO during the innate response to viral infection leading to the activation of TBK1. Positively regulates LPS-mediated inflammatory innate immune response by catalyzing the 'Lys-11'-linked polyubiquitination of TAB1 to enhance its activation and subsequent NF-kappa-B and MAPK signaling. In a manner independent of its catalytic activity, inhibits WWP2, a SOX2-directed E3 ubiquitin ligase, and thus protects SOX2 from polyubiquitination and proteasomal degradation. Ubiquitinates the histone acetyltransferase protein complex component PHF20 and thereby triggers its degradation in the nucleus after its recruitment by the histone demethylase KDM6B, serving as a scaffold protein. Upon induction by TGF-beta, ubiquitinates the TFIID component TAF7 for proteasomal degradation. Induces ferroptosis by ubiquitinating SLC7A11, a critical protein for lipid reactive oxygen species (ROS) scavenging. The chain is Tripartite motif-containing protein 26 (TRIM26) from Pan troglodytes (Chimpanzee).